We begin with the raw amino-acid sequence, 141 residues long: ATP synthase epsilon chain (141 aa).

Belongs to the ATPase epsilon chain family. F-type ATPases have 2 components, CF(1) - the catalytic core - and CF(0) - the membrane proton channel. CF(1) has five subunits: alpha(3), beta(3), gamma(1), delta(1), epsilon(1). CF(0) has three main subunits: a, b and c.

The protein localises to the cell membrane. In terms of biological role, produces ATP from ADP in the presence of a proton gradient across the membrane. This chain is ATP synthase epsilon chain, found in Mycoplasma mobile (strain ATCC 43663 / 163K / NCTC 11711) (Mesomycoplasma mobile).